The chain runs to 539 residues: Glucose-6-phosphate isomerase (539 aa).

Glutamate 349 (proton donor) is an active-site residue. Active-site residues include histidine 380 and lysine 508. Positions 519–539 (ESGASGQHDPSTAGLIQRLKR) are disordered.

This sequence belongs to the GPI family.

Its subcellular location is the cytoplasm. The enzyme catalyses alpha-D-glucose 6-phosphate = beta-D-fructose 6-phosphate. It functions in the pathway carbohydrate biosynthesis; gluconeogenesis. The protein operates within carbohydrate degradation; glycolysis; D-glyceraldehyde 3-phosphate and glycerone phosphate from D-glucose: step 2/4. Catalyzes the reversible isomerization of glucose-6-phosphate to fructose-6-phosphate. The protein is Glucose-6-phosphate isomerase of Caulobacter vibrioides (strain ATCC 19089 / CIP 103742 / CB 15) (Caulobacter crescentus).